We begin with the raw amino-acid sequence, 279 residues long: MLVQSRTLVTAILSCSLVFGTTVNGASVAIAQENVPMAALYEPDYESLETRLGSINNDAGLPNSVSQTVENFAELPEGTRFVLDSDTFAVAVSDGVVTSRLDSQTGVIRHTFGGAGTISYNPGEVTRSYIDRVTVRVVYPDSSIDIVTPHSVVEVSDSFYYSVQSIDSQRVRNGQSIKVPMTVIAGDGAIGGVPQGAKVVRDRYGSVEDAELMGATIVIDEKTGELTFTAPEDRTGQMWFAAELIYPDGTYSEVHYLFEVTDKSVQDDSVPFFGSSLSS.

An N-terminal signal peptide occupies residues 1–31; it reads MLVQSRTLVTAILSCSLVFGTTVNGASVAIA.

This is an uncharacterized protein from Corynebacterium glutamicum (strain ATCC 13032 / DSM 20300 / JCM 1318 / BCRC 11384 / CCUG 27702 / LMG 3730 / NBRC 12168 / NCIMB 10025 / NRRL B-2784 / 534).